The primary structure comprises 361 residues: tRNA/tmRNA (uracil-C(5))-methyltransferase (361 aa).

S-adenosyl-L-methionine-binding residues include Gln-185, Tyr-213, Asn-218, Glu-234, and Asp-294. Cys-319 serves as the catalytic Nucleophile. Glu-353 functions as the Proton acceptor in the catalytic mechanism.

Belongs to the class I-like SAM-binding methyltransferase superfamily. RNA M5U methyltransferase family. TrmA subfamily.

The enzyme catalyses uridine(54) in tRNA + S-adenosyl-L-methionine = 5-methyluridine(54) in tRNA + S-adenosyl-L-homocysteine + H(+). The catalysed reaction is uridine(341) in tmRNA + S-adenosyl-L-methionine = 5-methyluridine(341) in tmRNA + S-adenosyl-L-homocysteine + H(+). Dual-specificity methyltransferase that catalyzes the formation of 5-methyluridine at position 54 (m5U54) in all tRNAs, and that of position 341 (m5U341) in tmRNA (transfer-mRNA). This is tRNA/tmRNA (uracil-C(5))-methyltransferase from Pseudomonas savastanoi pv. phaseolicola (strain 1448A / Race 6) (Pseudomonas syringae pv. phaseolicola (strain 1448A / Race 6)).